The sequence spans 444 residues: MSEMTPREIVSELDQHIIGQADAKRAVAIALRNRWRRMQLQEPLRHEVTPKNILMIGPTGVGKTEIARRLAKLANAPFIKVEATKFTEVGYVGKEVDSIIRDLTDSAMKLVRQQEIAKNRARAEDAAEERILDALLPPAKNQWGEVESHDSHSSTRQAFRKKLREGQLDDKEIEIDVSAGVSMGVEIMAPPGMEEMTNQLQSLFQNLGSDKTKKRKMKIKDGLKALIDDEAAKLINPEELKQKAIDAVEQNGIVFIDEIDKICKKGEYSGADVSREGVQRDLLPLVEGSTVSTKHGMVKTDHILFIASGAFQVARPSDLIPELQGRLPIRVELTALSAADFERILTEPHASLTEQYKALMATEGVNIAFTTDAVKKIAEAAFCVNEKTENIGARRLHTVMERLMDKISFSASDMNGQTVNIDAAYVADALGEVVENEDLSRFIL.

Residues Ile18 and 60 to 65 contribute to the ATP site; that span reads GVGKTE. The disordered stretch occupies residues 143–163; the sequence is WGEVESHDSHSSTRQAFRKKL. 3 residues coordinate ATP: Asp257, Glu322, and Arg394.

This sequence belongs to the ClpX chaperone family. HslU subfamily. In terms of assembly, a double ring-shaped homohexamer of HslV is capped on each side by a ring-shaped HslU homohexamer. The assembly of the HslU/HslV complex is dependent on binding of ATP.

The protein resides in the cytoplasm. ATPase subunit of a proteasome-like degradation complex; this subunit has chaperone activity. The binding of ATP and its subsequent hydrolysis by HslU are essential for unfolding of protein substrates subsequently hydrolyzed by HslV. HslU recognizes the N-terminal part of its protein substrates and unfolds these before they are guided to HslV for hydrolysis. The protein is ATP-dependent protease ATPase subunit HslU of Haemophilus influenzae (strain PittEE).